We begin with the raw amino-acid sequence, 248 residues long: UDP-2,3-diacylglucosamine hydrolase (248 aa).

Mn(2+) is bound by residues D8, H10, D41, N79, and H114. Position 79–80 (79–80 (NR)) interacts with substrate. Substrate is bound by residues D122, N164, R167, and H195. H195 and H197 together coordinate Mn(2+).

The protein belongs to the LpxH family. Mn(2+) is required as a cofactor.

Its subcellular location is the cell inner membrane. It carries out the reaction UDP-2-N,3-O-bis[(3R)-3-hydroxytetradecanoyl]-alpha-D-glucosamine + H2O = 2-N,3-O-bis[(3R)-3-hydroxytetradecanoyl]-alpha-D-glucosaminyl 1-phosphate + UMP + 2 H(+). It participates in glycolipid biosynthesis; lipid IV(A) biosynthesis; lipid IV(A) from (3R)-3-hydroxytetradecanoyl-[acyl-carrier-protein] and UDP-N-acetyl-alpha-D-glucosamine: step 4/6. Hydrolyzes the pyrophosphate bond of UDP-2,3-diacylglucosamine to yield 2,3-diacylglucosamine 1-phosphate (lipid X) and UMP by catalyzing the attack of water at the alpha-P atom. Involved in the biosynthesis of lipid A, a phosphorylated glycolipid that anchors the lipopolysaccharide to the outer membrane of the cell. The sequence is that of UDP-2,3-diacylglucosamine hydrolase from Wigglesworthia glossinidia brevipalpis.